Here is a 180-residue protein sequence, read N- to C-terminus: Oligoribonuclease (180 aa).

One can recognise an Exonuclease domain in the interval Leu7–Leu170. The active site involves Tyr128.

Belongs to the oligoribonuclease family.

It is found in the cytoplasm. Functionally, 3'-to-5' exoribonuclease specific for small oligoribonucleotides. The chain is Oligoribonuclease from Ruthia magnifica subsp. Calyptogena magnifica.